Here is a 265-residue protein sequence, read N- to C-terminus: Apolipoprotein A-I (265 aa).

A signal peptide spans 1-18 (MKAVLLTLAVLFLTGSQA). 2 consecutive repeat copies span residues 67 to 88 (LKLL…EQLG) and 89 to 110 (PVTQ…QEMN). The interval 67–265 (LKLLDNWDSL…DEASKKLNAQ (199 aa)) is 10 X approximate tandem repeats. Residue methionine 109 is modified to Methionine sulfoxide. Residues 111–121 (KDLEEVKQKVQ) form a 3; half-length repeat. Repeat copies occupy residues 122–142 (PYLD…RQKV), 144–165 (PLGE…DKLT), 166–187 (PLAE…QQLA), 188–209 (PYSD…AGGG), and 210–230 (SLAE…EKAK). Residues 231 to 241 (PALEDLRQGLV) form a 9; half-length repeat. The stretch at 242–265 (PVLESLKVSILAAIDEASKKLNAQ) is repeat 10.

It belongs to the apolipoprotein A1/A4/E family. Homodimer. Interacts with APOA1BP and CLU. Component of a sperm activating protein complex (SPAP), consisting of APOA1, an immunoglobulin heavy chain, an immunoglobulin light chain and albumin. Interacts with NDRG1. Interacts with SCGB3A2. Interacts with NAXE and YJEFN3. Post-translationally, glycosylated. Palmitoylated. In terms of processing, phosphorylation sites are present in the extracellular medium. In terms of tissue distribution, major protein of plasma HDL, also found in chylomicrons.

The protein resides in the secreted. Its function is as follows. Participates in the reverse transport of cholesterol from tissues to the liver for excretion by promoting cholesterol efflux from tissues and by acting as a cofactor for the lecithin cholesterol acyltransferase (LCAT). As part of the SPAP complex, activates spermatozoa motility. In Tursiops truncatus (Atlantic bottle-nosed dolphin), this protein is Apolipoprotein A-I (APOA1).